Here is a 112-residue protein sequence, read N- to C-terminus: Cytochrome c3 (112 aa).

The heme c site is built by H26, H29, C34, C37, H38, H39, C49, C54, H55, H73, C83, C86, H87, C104, C109, and H110.

Heme serves as cofactor.

Its function is as follows. Participates in sulfate respiration coupled with phosphorylation by transferring electrons from the enzyme dehydrogenase to ferredoxin. In Megalodesulfovibrio gigas (strain ATCC 19364 / DSM 1382 / NCIMB 9332 / VKM B-1759) (Desulfovibrio gigas), this protein is Cytochrome c3.